We begin with the raw amino-acid sequence, 515 residues long: Maturase K (515 aa).

The protein belongs to the intron maturase 2 family. MatK subfamily.

It is found in the plastid. It localises to the chloroplast. Its function is as follows. Usually encoded in the trnK tRNA gene intron. Probably assists in splicing its own and other chloroplast group II introns. This is Maturase K from Pinus banksiana (Jack pine).